The following is a 758-amino-acid chain: Meiotic driver SPOK4 (758 aa).

Positions Lys-4–Glu-41 form a coiled coil. Disordered regions lie at residues Glu-180 to Ile-230 and Leu-414 to Pro-499. Residues Leu-181–Gly-190 show a composition bias toward basic and acidic residues. The segment covering Ser-416–Thr-429 has biased composition (polar residues). Residues Asn-457–Glu-468 show a composition bias toward basic and acidic residues.

The protein localises to the cytoplasm. It localises to the nucleus. In terms of biological role, promotes unequal transmission of alleles from the parental zygote to progeny spores by acting as poison/antidote system, leading to poisoning of progeny that do not inherit the allele. May possess DNA nuclease activity that leads to spore killing, and a kinase activity that confers resistance to the nuclease activity. Can suppress meiotic drive by the P.comata SPOK1 protein. The protein is Meiotic driver SPOK4 of Podospora anserina (Pleurage anserina).